The following is a 131-amino-acid chain: Translation initiation factor 5A (131 aa).

Lys37 carries the post-translational modification Hypusine.

Belongs to the eIF-5A family.

The protein resides in the cytoplasm. In terms of biological role, functions by promoting the formation of the first peptide bond. This is Translation initiation factor 5A (eIF5A) from Methanococcus maripaludis (strain C7 / ATCC BAA-1331).